Consider the following 221-residue polypeptide: Lactate racemization regulatory protein (221 aa).

Positions 139–213 (NGKKGAICAF…NHKFIIQDVS (75 aa)) constitute an HTH crp-type domain. The H-T-H motif DNA-binding region spans 172–192 (NDDIAGFCGISSRSSVNRMLK).

Multimerizes on DNA. Multimerization is required for transcription activation.

With respect to regulation, L-lactate acts as a positive effector on the binding and multimerization of LarR on DNA, while D-lactate antagonizes the positive effect of L-lactate. In terms of biological role, positive transcriptional regulator that is absolutely required for the expression of lactate racemase (Lar) activity. Controls Lar expression by sensing the L-/D-lactate ration. Binds to a 16-bp palindromic sequence (Lar box motif) that is present in the larR-larA intergenic region, allowing transcription of the larABCDE operon. This Lactiplantibacillus plantarum (strain ATCC BAA-793 / NCIMB 8826 / WCFS1) (Lactobacillus plantarum) protein is Lactate racemization regulatory protein.